An 89-amino-acid chain; its full sequence is Pigment-dispersing hormone peptides (89 aa).

The N-terminal stretch at 1–22 is a signal peptide; that stretch reads MTAMAVSGKLLTALVLSTYILG. Position 86 is an alanine amide (Ala-86).

This sequence belongs to the arthropod PDH family.

Its subcellular location is the secreted. Its function is as follows. Capable of inducing pigment dispersion in the chromatophores of the fiddler crab Uca pugilator. This Romalea microptera (Eastern lubber grasshopper) protein is Pigment-dispersing hormone peptides.